Consider the following 884-residue polypeptide: Nonsense-mediated mRNA decay factor EBS1 (884 aa).

Disordered stretches follow at residues 596 to 645 (NSMK…PTMG) and 755 to 774 (QGGL…NSAY). Positions 633–645 (RSSSLDSFSPTMG) are enriched in polar residues. Residues 760-772 (SSQQPSSMSSLNS) show a composition bias toward low complexity.

It belongs to the EST1 family. As to quaternary structure, interacts with NMD helicase UPF1. Interacts with CDC33.

The protein resides in the nucleus. It localises to the chromosome. Its subcellular location is the telomere. It is found in the cytoplasm. The protein localises to the P-body. Plays a role in nonsense-mediated mRNA decay (NMD). Recruits UPF1 to cytoplasmic mRNA decay bodies (P-bodies). Negative regulator of gene expression. Inhibits translation most likely through effects on eIF-4E (CDC33). Involved in telomere maintenance. The protein is Nonsense-mediated mRNA decay factor EBS1 of Saccharomyces cerevisiae (strain ATCC 204508 / S288c) (Baker's yeast).